A 353-amino-acid chain; its full sequence is UDP-N-acetylenolpyruvoylglucosamine reductase (353 aa).

Residues 31-201 enclose the FAD-binding PCMH-type domain; it reads LASHAPAFVA…GSVRFALPRP (171 aa). Arg-177 is a catalytic residue. Ser-250 functions as the Proton donor in the catalytic mechanism. Residue Glu-346 is part of the active site.

This sequence belongs to the MurB family. The cofactor is FAD.

It localises to the cytoplasm. The catalysed reaction is UDP-N-acetyl-alpha-D-muramate + NADP(+) = UDP-N-acetyl-3-O-(1-carboxyvinyl)-alpha-D-glucosamine + NADPH + H(+). Its pathway is cell wall biogenesis; peptidoglycan biosynthesis. In terms of biological role, cell wall formation. This Bordetella parapertussis (strain 12822 / ATCC BAA-587 / NCTC 13253) protein is UDP-N-acetylenolpyruvoylglucosamine reductase.